We begin with the raw amino-acid sequence, 158 residues long: Transcriptional regulatory protein DoeX (158 aa).

One can recognise an HTH asnC-type domain in the interval 3–64 (LDRYDLKILE…RLNTDVLVKR (62 aa)). Residues 22-41 (KSKLAEAINLSVSPCWERVR) constitute a DNA-binding region (H-T-H motif).

The protein resides in the cytoplasm. In terms of biological role, acts as a transcriptional regulator. It binds DNA specifically to a fragment from the doeA promoter region. The sequence is that of Transcriptional regulatory protein DoeX (doeX) from Halomonas elongata (strain ATCC 33173 / DSM 2581 / NBRC 15536 / NCIMB 2198 / 1H9).